The following is a 490-amino-acid chain: Betaine aldehyde dehydrogenase (490 aa).

Positions 26, 27, and 93 each coordinate K(+). An NAD(+)-binding site is contributed by 150–152 (GAW). Lys-162 serves as the catalytic Charge relay system. 176–179 (KPSE) contacts NAD(+). Val-180 lines the K(+) pocket. NAD(+) is bound at residue 230–233 (GVAS). Leu-246 is a K(+) binding site. The Proton acceptor role is filled by Glu-252. NAD(+)-binding residues include Gly-254, Cys-286, and Glu-387. Catalysis depends on Cys-286, which acts as the Nucleophile. Residue Cys-286 is modified to Cysteine sulfenic acid (-SOH). Lys-457 and Gly-460 together coordinate K(+). Glu-464 (charge relay system) is an active-site residue.

It belongs to the aldehyde dehydrogenase family. As to quaternary structure, dimer of dimers. Requires K(+) as cofactor.

It catalyses the reaction betaine aldehyde + NAD(+) + H2O = glycine betaine + NADH + 2 H(+). Its pathway is amine and polyamine biosynthesis; betaine biosynthesis via choline pathway; betaine from betaine aldehyde: step 1/1. Its function is as follows. Involved in the biosynthesis of the osmoprotectant glycine betaine. Catalyzes the irreversible oxidation of betaine aldehyde to the corresponding acid. This is Betaine aldehyde dehydrogenase from Escherichia coli (strain K12 / DH10B).